A 75-amino-acid polypeptide reads, in one-letter code: Small ribosomal subunit protein bS16c (75 aa).

Belongs to the bacterial ribosomal protein bS16 family.

The protein localises to the plastid. It localises to the chloroplast. In Cyanidioschyzon merolae (strain NIES-3377 / 10D) (Unicellular red alga), this protein is Small ribosomal subunit protein bS16c.